We begin with the raw amino-acid sequence, 60 residues long: Putative transcriptional regulator XtpA (60 aa).

In terms of biological role, controls the expression of small non-coding RNA GcvB, which represses the expression of many amino acid transporter proteins and uptake of aminoglycoside antibiotics in cells. Might be a transcriptional activator. An RNA (xtr) with a tRNA-like fold possibly derived from tRNA-Arg(UCG) is encoded entirely within the protein; xtr does not have the sequence corresponding to tRNA anticodon or variable arms. 10 synonymous codon changes in the xtr region of xtpA have the same phenotype as a deletion mutation, suggesting the mRNA secondary structure is important for function. The protein is Putative transcriptional regulator XtpA of Escherichia coli (strain K12).